A 577-amino-acid chain; its full sequence is Arginine--tRNA ligase (577 aa).

The 'HIGH' region signature appears at 124–132 (VAKEMHVGH).

This sequence belongs to the class-I aminoacyl-tRNA synthetase family. In terms of assembly, monomer.

It is found in the cytoplasm. The enzyme catalyses tRNA(Arg) + L-arginine + ATP = L-arginyl-tRNA(Arg) + AMP + diphosphate. The sequence is that of Arginine--tRNA ligase from Salmonella typhi.